A 485-amino-acid chain; its full sequence is Cysteine--tRNA ligase (485 aa).

Residue Cys29 participates in Zn(2+) binding. Positions 31–41 (VTVYDHCHIGH) match the 'HIGH' region motif. Positions 209, 234, and 238 each coordinate Zn(2+). The 'KMSKS' region motif lies at 266–270 (KMSKS). Lys269 provides a ligand contact to ATP.

It belongs to the class-I aminoacyl-tRNA synthetase family. Monomer. Requires Zn(2+) as cofactor.

It is found in the cytoplasm. The catalysed reaction is tRNA(Cys) + L-cysteine + ATP = L-cysteinyl-tRNA(Cys) + AMP + diphosphate. This Geobacter metallireducens (strain ATCC 53774 / DSM 7210 / GS-15) protein is Cysteine--tRNA ligase.